Consider the following 157-residue polypeptide: UPF0262 protein amb3341 (157 aa).

Belongs to the UPF0262 family.

This is UPF0262 protein amb3341 from Paramagnetospirillum magneticum (strain ATCC 700264 / AMB-1) (Magnetospirillum magneticum).